The primary structure comprises 369 residues: Outer membrane porin F (369 aa).

The N-terminal stretch at 1 to 21 is a signal peptide; the sequence is MKRNILAVVIPALLVAGTANA. Residues 22–27 form a beta stranded membrane-spanning segment; it reads AEIFNK. A topological domain (periplasmic) is located at residue aspartate 28. A beta stranded transmembrane segment spans residues 29 to 44; that stretch reads GNKLDLYGKVDVRHQF. Over 45-55 the chain is Extracellular; the sequence is ADKRSSEDGDD. Residues 56-68 traverse the membrane as a beta stranded segment; that stretch reads SYARIGIKGETQI. Topologically, residues 69-70 are periplasmic; the sequence is SD. Residues 71-83 form a beta stranded membrane-spanning segment; it reads QLTGFGRWEYNVK. The Extracellular segment spans residues 84–97; that stretch reads AKGTEAAVAESSTR. A beta stranded membrane pass occupies residues 98-106; it reads LAFAGLKFA. At 107-108 the chain is on the periplasmic side; it reads NY. A beta stranded membrane pass occupies residues 109–115; sequence GSLDYGR. The Extracellular segment spans residues 116–150; the sequence is NYGVNYDVNAWTDVLPIFGGDAMAQTDNFMTGRST. The chain crosses the membrane as a beta stranded span at residues 151–157; that stretch reads GLLTYRN. Over 158 to 165 the chain is Periplasmic; that stretch reads TDFFGLVD. A beta stranded membrane pass occupies residues 166 to 177; sequence GLNFALQYQGQN. The Extracellular segment spans residues 178–193; sequence SDRTKNKGRDTERSNG. A beta stranded membrane pass occupies residues 194 to 204; the sequence is DGYGLSSTYDV. Residues 205-206 are Periplasmic-facing; it reads GY. The chain crosses the membrane as a beta stranded span at residues 207-219; sequence GITVGGSYANSAR. The Extracellular portion of the chain corresponds to 220–234; the sequence is TADQKEKVSDAYGKR. The beta stranded transmembrane segment at 235 to 246 threads the bilayer; sequence AEAWNIGAKYDA. Residue asparagine 247 is a topological domain, periplasmic. Residues 248–259 form a beta stranded membrane-spanning segment; that stretch reads NVYLAAMYGETR. Over 260–278 the chain is Extracellular; it reads NMTRYTRTIADTDATLIAN. A beta stranded membrane pass occupies residues 279 to 291; that stretch reads KTQNIELTAQYLF. Residues 292–294 are Periplasmic-facing; that stretch reads SDL. Residues 295 to 308 traverse the membrane as a beta stranded segment; that stretch reads GLKPSLAYVQSKGK. At 309–320 the chain is on the extracellular side; it reads DLTEGKGFNGDL. A beta stranded transmembrane segment spans residues 321 to 332; the sequence is VKYVSVGTYYYF. At 333-334 the chain is on the periplasmic side; the sequence is NK. The chain crosses the membrane as a beta stranded span at residues 335–344; sequence NLSTYVDYKI. The Extracellular portion of the chain corresponds to 345 to 359; sequence NLLKKDNELGVNARN. Residues 360–369 form a beta stranded membrane-spanning segment; it reads VFGVGLTYQF.

The protein belongs to the Gram-negative porin family. Homotrimer.

The protein localises to the cell outer membrane. Forms pores that allow passive diffusion of small molecules across the outer membrane. This is Outer membrane porin F (ompF) from Xenorhabdus nematophila (strain ATCC 19061 / DSM 3370 / CCUG 14189 / LMG 1036 / NCIMB 9965 / AN6).